The primary structure comprises 407 residues: Multidrug resistance protein MdtH (407 aa).

The next 10 membrane-spanning stretches (helical) occupy residues 13 to 33 (CFLI…FPLI), 88 to 108 (LGFI…SCML), 139 to 159 (VLML…TWLL), 163 to 183 (FKLV…FNAW), 210 to 230 (FVIY…VMLM), 247 to 267 (WMYI…TWWS), 277 to 297 (LMVG…VKNL), 298 to 318 (HTLL…EPAR), 340 to 360 (LSLA…YDIG), and 368 to 388 (LPWI…YCQF).

This sequence belongs to the major facilitator superfamily. DHA1 family. MdtH (TC 2.A.1.2.21) subfamily.

It is found in the cell inner membrane. In Blochmanniella pennsylvanica (strain BPEN), this protein is Multidrug resistance protein MdtH.